An 879-amino-acid chain; its full sequence is Leucine--tRNA ligase (879 aa).

A 'HIGH' region motif is present at residues 45–55 (PYPSGALHMGH). Residues 637-641 (KMSKS) carry the 'KMSKS' region motif. An ATP-binding site is contributed by lysine 640.

It belongs to the class-I aminoacyl-tRNA synthetase family.

The protein localises to the cytoplasm. It catalyses the reaction tRNA(Leu) + L-leucine + ATP = L-leucyl-tRNA(Leu) + AMP + diphosphate. This is Leucine--tRNA ligase from Xylella fastidiosa (strain M23).